The following is a 147-amino-acid chain: Putative pre-16S rRNA nuclease (147 aa).

It belongs to the YqgF nuclease family.

It localises to the cytoplasm. Its function is as follows. Could be a nuclease involved in processing of the 5'-end of pre-16S rRNA. This chain is Putative pre-16S rRNA nuclease, found in Ureaplasma parvum serovar 3 (strain ATCC 27815 / 27 / NCTC 11736).